The chain runs to 226 residues: Cobalt transport protein CbiM 2 (226 aa).

A run of 6 helical transmembrane segments spans residues 6–26 (GFLP…VVAY), 43–63 (MLLG…MPSV), 75–95 (LGAI…VLLF), 107–127 (TLGA…AAVF), 135–155 (FPFG…TYVT), and 181–201 (VFAL…VVVM).

It belongs to the CbiM family. In terms of assembly, forms an energy-coupling factor (ECF) transporter complex composed of an ATP-binding protein (A component, CbiO), a transmembrane protein (T component, CbiQ) and 2 possible substrate-capture proteins (S components, CbiM and CbiN) of unknown stoichimetry.

It localises to the cell inner membrane. Its pathway is cofactor biosynthesis; adenosylcobalamin biosynthesis. Its function is as follows. Part of the energy-coupling factor (ECF) transporter complex CbiMNOQ involved in cobalt import. This Pelobacter propionicus (strain DSM 2379 / NBRC 103807 / OttBd1) protein is Cobalt transport protein CbiM 2.